A 67-amino-acid chain; its full sequence is Cell division protein ZapB (67 aa).

A coiled-coil region spans residues 3 to 59 (LELLSKLETKIQAALETIELLKMELEEEKQTSSSLSEQNQQLQQELTSWNEKVTGLV).

The protein belongs to the ZapB family. In terms of assembly, homodimer. The ends of the coiled-coil dimer bind to each other, forming polymers. Interacts with FtsZ.

Its subcellular location is the cytoplasm. Its function is as follows. Non-essential, abundant cell division factor that is required for proper Z-ring formation. It is recruited early to the divisome by direct interaction with FtsZ, stimulating Z-ring assembly and thereby promoting cell division earlier in the cell cycle. Its recruitment to the Z-ring requires functional FtsA or ZipA. This chain is Cell division protein ZapB, found in Shewanella halifaxensis (strain HAW-EB4).